The sequence spans 240 residues: Phosphoribosylaminoimidazole-succinocarboxamide synthase (240 aa).

The protein belongs to the SAICAR synthetase family.

It catalyses the reaction 5-amino-1-(5-phospho-D-ribosyl)imidazole-4-carboxylate + L-aspartate + ATP = (2S)-2-[5-amino-1-(5-phospho-beta-D-ribosyl)imidazole-4-carboxamido]succinate + ADP + phosphate + 2 H(+). It functions in the pathway purine metabolism; IMP biosynthesis via de novo pathway; 5-amino-1-(5-phospho-D-ribosyl)imidazole-4-carboxamide from 5-amino-1-(5-phospho-D-ribosyl)imidazole-4-carboxylate: step 1/2. In Limosilactobacillus fermentum (strain NBRC 3956 / LMG 18251) (Lactobacillus fermentum), this protein is Phosphoribosylaminoimidazole-succinocarboxamide synthase.